The following is a 382-amino-acid chain: ATP phosphoribosyltransferase regulatory subunit (382 aa).

It belongs to the class-II aminoacyl-tRNA synthetase family. HisZ subfamily. Heteromultimer composed of HisG and HisZ subunits.

It localises to the cytoplasm. It functions in the pathway amino-acid biosynthesis; L-histidine biosynthesis; L-histidine from 5-phospho-alpha-D-ribose 1-diphosphate: step 1/9. In terms of biological role, required for the first step of histidine biosynthesis. May allow the feedback regulation of ATP phosphoribosyltransferase activity by histidine. The protein is ATP phosphoribosyltransferase regulatory subunit of Albidiferax ferrireducens (strain ATCC BAA-621 / DSM 15236 / T118) (Rhodoferax ferrireducens).